We begin with the raw amino-acid sequence, 213 residues long: Orotate phosphoribosyltransferase (213 aa).

Residue Lys26 participates in 5-phospho-alpha-D-ribose 1-diphosphate binding. 34 to 35 (FF) is a binding site for orotate. 5-phospho-alpha-D-ribose 1-diphosphate is bound by residues 72–73 (YK), Arg99, Lys100, Lys103, His105, and 124–132 (DDVITAGTA). Positions 128 and 156 each coordinate orotate.

The protein belongs to the purine/pyrimidine phosphoribosyltransferase family. PyrE subfamily. In terms of assembly, homodimer. Mg(2+) is required as a cofactor.

It carries out the reaction orotidine 5'-phosphate + diphosphate = orotate + 5-phospho-alpha-D-ribose 1-diphosphate. The protein operates within pyrimidine metabolism; UMP biosynthesis via de novo pathway; UMP from orotate: step 1/2. In terms of biological role, catalyzes the transfer of a ribosyl phosphate group from 5-phosphoribose 1-diphosphate to orotate, leading to the formation of orotidine monophosphate (OMP). The sequence is that of Orotate phosphoribosyltransferase from Escherichia coli O45:K1 (strain S88 / ExPEC).